Consider the following 372-residue polypeptide: Lipoyl synthase, mitochondrial (372 aa).

Residues 1-27 constitute a mitochondrion transit peptide; the sequence is MSLRCGDAARTLGPRVFGRYFCSPVRP. Positions 106, 111, 117, 137, 141, 144, and 352 each coordinate [4Fe-4S] cluster. In terms of domain architecture, Radical SAM core spans 122-341; that stretch reads EYATATATIM…EKVGNELGFH (220 aa).

Belongs to the radical SAM superfamily. Lipoyl synthase family. Requires [4Fe-4S] cluster as cofactor.

It is found in the mitochondrion. The catalysed reaction is [[Fe-S] cluster scaffold protein carrying a second [4Fe-4S](2+) cluster] + N(6)-octanoyl-L-lysyl-[protein] + 2 oxidized [2Fe-2S]-[ferredoxin] + 2 S-adenosyl-L-methionine + 4 H(+) = [[Fe-S] cluster scaffold protein] + N(6)-[(R)-dihydrolipoyl]-L-lysyl-[protein] + 4 Fe(3+) + 2 hydrogen sulfide + 2 5'-deoxyadenosine + 2 L-methionine + 2 reduced [2Fe-2S]-[ferredoxin]. Its pathway is protein modification; protein lipoylation via endogenous pathway; protein N(6)-(lipoyl)lysine from octanoyl-[acyl-carrier-protein]: step 2/2. Catalyzes the radical-mediated insertion of two sulfur atoms into the C-6 and C-8 positions of the octanoyl moiety bound to the lipoyl domains of lipoate-dependent enzymes, thereby converting the octanoylated domains into lipoylated derivatives. The polypeptide is Lipoyl synthase, mitochondrial (Homo sapiens (Human)).